We begin with the raw amino-acid sequence, 101 residues long: Putative pterin-4-alpha-carbinolamine dehydratase (101 aa).

Belongs to the pterin-4-alpha-carbinolamine dehydratase family.

It catalyses the reaction (4aS,6R)-4a-hydroxy-L-erythro-5,6,7,8-tetrahydrobiopterin = (6R)-L-erythro-6,7-dihydrobiopterin + H2O. In Burkholderia mallei (strain ATCC 23344), this protein is Putative pterin-4-alpha-carbinolamine dehydratase.